A 101-amino-acid chain; its full sequence is MAGQKIRIRLKAYDHEAIDASARKIVETVVRTGASVVGPVPLPTEKNVYCVIRSPHKYKDSREHFEMRTHKRLIDIIDPTPKTVDALMRIDLPASVDVNIQ.

The protein belongs to the universal ribosomal protein uS10 family. Part of the 30S ribosomal subunit.

Its function is as follows. Involved in the binding of tRNA to the ribosomes. The polypeptide is Small ribosomal subunit protein uS10 (Mycobacterium bovis (strain ATCC BAA-935 / AF2122/97)).